The following is a 197-amino-acid chain: ATP-dependent Clp protease proteolytic subunit 2 (197 aa).

S96 functions as the Nucleophile in the catalytic mechanism. Residue H121 is part of the active site.

Belongs to the peptidase S14 family. Fourteen ClpP subunits assemble into 2 heptameric rings which stack back to back to give a disk-like structure with a central cavity, resembling the structure of eukaryotic proteasomes.

The protein resides in the cytoplasm. The enzyme catalyses Hydrolysis of proteins to small peptides in the presence of ATP and magnesium. alpha-casein is the usual test substrate. In the absence of ATP, only oligopeptides shorter than five residues are hydrolyzed (such as succinyl-Leu-Tyr-|-NHMec, and Leu-Tyr-Leu-|-Tyr-Trp, in which cleavage of the -Tyr-|-Leu- and -Tyr-|-Trp bonds also occurs).. Its function is as follows. Cleaves peptides in various proteins in a process that requires ATP hydrolysis. Has a chymotrypsin-like activity. Plays a major role in the degradation of misfolded proteins. This Synechococcus sp. (strain CC9605) protein is ATP-dependent Clp protease proteolytic subunit 2.